The chain runs to 317 residues: MARRSKGRFIDGIVLLDKATGMSSNFALQRVKRFFNANKAGHTGALDPLATGMLPVCLGEATKFSQHLLDSDKRYLVTAKLGQRTDTSDSDGEVVQTRPLEFTEAQLMSALEHFRGDTQQVPSMYSALKYQGQPLYKYAREGIEVPREARPITVFELNFIGLEGDELTLDIHCSKGTYIRTIIDDLGEMLGCGAHVIMLRRTQVAHYPYDKMVTLEQLEALVAKAQEEQLDPSSLLDSLLLPMDTAVADFPEVNVPDASAAYLMQGQAVRVSGLVADTLVRITLGTERRFVGIGEMNQDGLLAPKRLVVLHDQAKAS.

Aspartate 47 functions as the Nucleophile in the catalytic mechanism.

It belongs to the pseudouridine synthase TruB family. Type 1 subfamily.

The enzyme catalyses uridine(55) in tRNA = pseudouridine(55) in tRNA. Its function is as follows. Responsible for synthesis of pseudouridine from uracil-55 in the psi GC loop of transfer RNAs. This is tRNA pseudouridine synthase B from Shewanella sp. (strain ANA-3).